The primary structure comprises 360 residues: NAD(P)H-quinone oxidoreductase subunit 1, chloroplastic (360 aa).

8 helical membrane-spanning segments follow: residues 27–47, 98–118, 129–149, 165–185, 203–223, 253–273, 297–317, and 340–360; these read IWIF…VLVI, FSIG…IIPF, IGIF…LMSG, AAQS…ISLL, FWGW…ISSL, FGLF…FVTV, IFGT…FLFI, and FLLP…LFSL.

The protein belongs to the complex I subunit 1 family. NDH is composed of at least 16 different subunits, 5 of which are encoded in the nucleus.

Its subcellular location is the plastid. The protein localises to the chloroplast thylakoid membrane. The enzyme catalyses a plastoquinone + NADH + (n+1) H(+)(in) = a plastoquinol + NAD(+) + n H(+)(out). It carries out the reaction a plastoquinone + NADPH + (n+1) H(+)(in) = a plastoquinol + NADP(+) + n H(+)(out). In terms of biological role, NDH shuttles electrons from NAD(P)H:plastoquinone, via FMN and iron-sulfur (Fe-S) centers, to quinones in the photosynthetic chain and possibly in a chloroplast respiratory chain. The immediate electron acceptor for the enzyme in this species is believed to be plastoquinone. Couples the redox reaction to proton translocation, and thus conserves the redox energy in a proton gradient. In Lobularia maritima (Sweet alyssum), this protein is NAD(P)H-quinone oxidoreductase subunit 1, chloroplastic.